Here is a 955-residue protein sequence, read N- to C-terminus: 2-oxoglutarate dehydrogenase E1 component (955 aa).

Belongs to the alpha-ketoglutarate dehydrogenase family. As to quaternary structure, homodimer. Part of the 2-oxoglutarate dehydrogenase (OGDH) complex composed of E1 (2-oxoglutarate dehydrogenase), E2 (dihydrolipoamide succinyltransferase) and E3 (dihydrolipoamide dehydrogenase); the complex contains multiple copies of the three enzymatic components (E1, E2 and E3). The cofactor is thiamine diphosphate.

The enzyme catalyses N(6)-[(R)-lipoyl]-L-lysyl-[protein] + 2-oxoglutarate + H(+) = N(6)-[(R)-S(8)-succinyldihydrolipoyl]-L-lysyl-[protein] + CO2. Functionally, E1 component of the 2-oxoglutarate dehydrogenase (OGDH) complex which catalyzes the decarboxylation of 2-oxoglutarate, the first step in the conversion of 2-oxoglutarate to succinyl-CoA and CO(2). This Bacillus anthracis (strain A0248) protein is 2-oxoglutarate dehydrogenase E1 component.